The chain runs to 65 residues: DNA gyrase inhibitor YacG (65 aa).

Zn(2+)-binding residues include Cys9, Cys12, Cys28, and Cys32. The interval 43 to 65 is disordered; the sequence is EEKRIPSQSENSDSDDWSGQPEQ.

It belongs to the DNA gyrase inhibitor YacG family. In terms of assembly, interacts with GyrB. It depends on Zn(2+) as a cofactor.

Functionally, inhibits all the catalytic activities of DNA gyrase by preventing its interaction with DNA. Acts by binding directly to the C-terminal domain of GyrB, which probably disrupts DNA binding by the gyrase. The chain is DNA gyrase inhibitor YacG from Photorhabdus laumondii subsp. laumondii (strain DSM 15139 / CIP 105565 / TT01) (Photorhabdus luminescens subsp. laumondii).